Here is a 257-residue protein sequence, read N- to C-terminus: UPF0246 protein CLL_A2361 (257 aa).

The protein belongs to the UPF0246 family.

The sequence is that of UPF0246 protein CLL_A2361 from Clostridium botulinum (strain Eklund 17B / Type B).